A 463-amino-acid chain; its full sequence is tRNA modification GTPase MnmE (463 aa).

(6S)-5-formyl-5,6,7,8-tetrahydrofolate contacts are provided by Arg30, Glu92, and Arg132. Residues 227–386 (GLRVALVGRP…LVQAVLERCG (160 aa)) form the TrmE-type G domain. A K(+)-binding site is contributed by Asn237. GTP-binding positions include 237 to 242 (NVGKSS), 256 to 262 (TDLPGTT), 281 to 284 (DTAG), and 342 to 345 (NKAD). Ser241 contributes to the Mg(2+) binding site. K(+) contacts are provided by Thr256, Leu258, and Thr261. Thr262 contributes to the Mg(2+) binding site. Lys463 serves as a coordination point for (6S)-5-formyl-5,6,7,8-tetrahydrofolate.

Belongs to the TRAFAC class TrmE-Era-EngA-EngB-Septin-like GTPase superfamily. TrmE GTPase family. As to quaternary structure, homodimer. Heterotetramer of two MnmE and two MnmG subunits. Requires K(+) as cofactor.

The protein localises to the cytoplasm. Exhibits a very high intrinsic GTPase hydrolysis rate. Involved in the addition of a carboxymethylaminomethyl (cmnm) group at the wobble position (U34) of certain tRNAs, forming tRNA-cmnm(5)s(2)U34. This chain is tRNA modification GTPase MnmE, found in Synechococcus sp. (strain CC9311).